Reading from the N-terminus, the 494-residue chain is ATP synthase subunit alpha 1 (494 aa).

Belongs to the ATPase alpha/beta chains family. In terms of assembly, F-type ATPases have 2 components, CF(1) - the catalytic core - and CF(0) - the membrane proton channel. CF(1) has five subunits: alpha(3), beta(3), gamma(1), delta(1), epsilon(1). CF(0) has three main subunits: a(1), b(2) and c(9-12). The alpha and beta chains form an alternating ring which encloses part of the gamma chain. CF(1) is attached to CF(0) by a central stalk formed by the gamma and epsilon chains, while a peripheral stalk is formed by the delta and b chains.

It is found in the cell inner membrane. The catalysed reaction is ATP + H2O + 4 H(+)(in) = ADP + phosphate + 5 H(+)(out). In terms of biological role, produces ATP from ADP in the presence of a proton gradient across the membrane. The alpha chain is a regulatory subunit. The protein is ATP synthase subunit alpha 1 of Hahella chejuensis (strain KCTC 2396).